The chain runs to 686 residues: Tripartite terminase subunit 3 (686 aa).

Positions 219-226 (IPRRHGKT) match the Walker A motif motif. The Walker B motif motif lies at 314 to 319 (LLYVDE). Glu319 serves as the catalytic For ATPase activity. Active-site for nuclease activity residues include Asp475, Glu548, and Asp660.

Belongs to the herpesviridae TRM3 protein family. As to quaternary structure, interacts with the terminase subunits TRM1 and TRM2. Interacts with portal protein.

It is found in the host nucleus. Functionally, component of the molecular motor that translocates viral genomic DNA in empty capsid during DNA packaging. Forms a tripartite terminase complex together with TRM1 and TRM2 in the host cytoplasm. Once the complex reaches the host nucleus, it interacts with the capsid portal vertex. This portal forms a ring in which genomic DNA is translocated into the capsid. TRM3 carries an RNase H-like nuclease activity that plays an important role for the cleavage of concatemeric viral DNA into unit length genomes. This is Tripartite terminase subunit 3 from Equine herpesvirus 2 (strain 86/87) (EHV-2).